Here is a 411-residue protein sequence, read N- to C-terminus: S-adenosylmethionine synthase (411 aa).

His-15 contacts ATP. Residue Asp-17 participates in Mg(2+) binding. K(+) is bound at residue Glu-43. 2 residues coordinate L-methionine: Glu-56 and Gln-100. Positions 100 to 110 (QSPDIAQGVNE) are flexible loop. Residues 171–173 (DGK), 248–249 (KF), Asp-257, 263–264 (RK), Ala-280, and Lys-284 contribute to the ATP site. An L-methionine-binding site is contributed by Asp-257. Lys-288 contacts L-methionine.

Belongs to the AdoMet synthase family. As to quaternary structure, homotetramer; dimer of dimers. The cofactor is Mg(2+). Requires K(+) as cofactor.

The protein resides in the cytoplasm. It carries out the reaction L-methionine + ATP + H2O = S-adenosyl-L-methionine + phosphate + diphosphate. It functions in the pathway amino-acid biosynthesis; S-adenosyl-L-methionine biosynthesis; S-adenosyl-L-methionine from L-methionine: step 1/1. Catalyzes the formation of S-adenosylmethionine (AdoMet) from methionine and ATP. The overall synthetic reaction is composed of two sequential steps, AdoMet formation and the subsequent tripolyphosphate hydrolysis which occurs prior to release of AdoMet from the enzyme. The chain is S-adenosylmethionine synthase from Synechococcus sp. (strain CC9605).